Reading from the N-terminus, the 315-residue chain is Secreted frizzled-related protein 5 (315 aa).

An N-terminal signal peptide occupies residues 1–27 (MRAAAGGARAAVLALLLGALHGAPARG). An FZ domain is found at 46-163 (SKPPQCLDIP…PLDNDLCIAV (118 aa)). Disulfide bonds link cysteine 51–cysteine 114, cysteine 61–cysteine 107, cysteine 98–cysteine 133, cysteine 122–cysteine 160, cysteine 126–cysteine 150, cysteine 179–cysteine 251, cysteine 182–cysteine 253, and cysteine 196–cysteine 301. The NTR domain occupies 179–301 (CAQCEMEHSA…AVKFMFSYPC (123 aa)).

The protein belongs to the secreted frizzled-related protein (sFRP) family. As to expression, strongly expressed in the retinal pigment epithelium (RPE). Weak expression in retina, brain, heart, liver, kidney, testis and muscle.

The protein resides in the secreted. Its function is as follows. Soluble frizzled-related proteins (sFRPS) function as modulators of Wnt signaling through direct interaction with Wnts. They have a role in regulating cell growth and differentiation in specific cell types. SFRP5 may be involved in determining the polarity of photoreceptor, and perhaps other, cells in the retina. Inhibits Wnt8 signaling, in vitro. The sequence is that of Secreted frizzled-related protein 5 (SFRP5) from Bos taurus (Bovine).